The following is a 228-amino-acid chain: Ephrin-A5b (228 aa).

Residues 1–20 (MLQAEMIVFVGVILWMCVFS) form the signal peptide. The region spanning 29–162 (ADRYAVFWNR…KLKVFVRPPN (134 aa)) is the Ephrin RBD domain. N-linked (GlcNAc...) asparagine glycosylation occurs at Asn37. Cystine bridges form between Cys62/Cys102 and Cys90/Cys151. Residues 184–198 (LEPRDDTSHEAEPSR) are compositionally biased toward basic and acidic residues. Positions 184–205 (LEPRDDTSHEAEPSRSDVSTSG) are disordered. Ser204 carries the GPI-anchor amidated serine lipid modification. Positions 205–228 (GLRHQTSRPLLALLLLCISLYLLL) are cleaved as a propeptide — removed in mature form.

This sequence belongs to the ephrin family. In terms of tissue distribution, widespread expression in the embryo.

Its subcellular location is the cell membrane. Its function is as follows. Cell surface GPI-bound ligand for Eph receptors, a family of receptor tyrosine kinases which are crucial for migration, repulsion and adhesion during neuronal, vascular and epithelial development. Binds promiscuously Eph receptors residing on adjacent cells, leading to contact-dependent bidirectional signaling into neighboring cells. Induces compartmentalized signaling within a caveolae-like membrane microdomain when bound to the extracellular domain of its cognate receptor. This signaling event requires the activity of the Fyn tyrosine kinase. Activates the epha3 receptor to regulate cell-cell adhesion and cytoskeletal organization. With the receptor epha2 may regulate lens fiber cells shape and interactions and be important for lens transparency maintenance. May function actively to stimulate axon fasciculation. Controls axon growth and may be involved in the creation of the retino-tectal map. The protein is Ephrin-A5b (efna5b) of Danio rerio (Zebrafish).